The primary structure comprises 224 residues: uncharacterized protein (224 aa).

The active site involves Asp-52.

It belongs to the pseudouridine synthase RluA family.

It catalyses the reaction a uridine in RNA = a pseudouridine in RNA. This is an uncharacterized protein from Haemophilus influenzae (strain ATCC 51907 / DSM 11121 / KW20 / Rd).